Consider the following 404-residue polypeptide: Lipase lipl-3 (404 aa).

The first 20 residues, 1 to 20 (MCSSLCALLLVILAVHNVHA), serve as a signal peptide directing secretion. Residue asparagine 65 is glycosylated (N-linked (GlcNAc...) asparagine). The active-site Nucleophile is the serine 168. Asparagine 272 carries an N-linked (GlcNAc...) asparagine glycan. Catalysis depends on charge relay system residues aspartate 344 and histidine 376.

It belongs to the AB hydrolase superfamily. Lipase family.

Its subcellular location is the secreted. The protein resides in the lysosome lumen. Lipase that, together with lipl-1, plays a role in the response to nutrient deprivation by controlling lipid metabolism. Specifically, involved in the breakdown of lipids during lipophagy, a process during which lipids contained in lipid droplets that have been delivered to lysosomes by autophagy are degraded. The protein is Lipase lipl-3 of Caenorhabditis elegans.